A 267-amino-acid polypeptide reads, in one-letter code: 3-methyl-2-oxobutanoate hydroxymethyltransferase (267 aa).

Positions 45 and 84 each coordinate Mg(2+). 3-methyl-2-oxobutanoate is bound by residues 45–46 (DS), Asp84, and Lys113. Position 115 (Glu115) interacts with Mg(2+). Residue Glu182 is the Proton acceptor of the active site.

The protein belongs to the PanB family. As to quaternary structure, homodecamer; pentamer of dimers. Mg(2+) is required as a cofactor.

The protein localises to the cytoplasm. It catalyses the reaction 3-methyl-2-oxobutanoate + (6R)-5,10-methylene-5,6,7,8-tetrahydrofolate + H2O = 2-dehydropantoate + (6S)-5,6,7,8-tetrahydrofolate. It participates in cofactor biosynthesis; coenzyme A biosynthesis. Its function is as follows. Catalyzes the reversible reaction in which hydroxymethyl group from 5,10-methylenetetrahydrofolate is transferred onto alpha-ketoisovalerate to form ketopantoate. The chain is 3-methyl-2-oxobutanoate hydroxymethyltransferase from Sulfurisphaera tokodaii (strain DSM 16993 / JCM 10545 / NBRC 100140 / 7) (Sulfolobus tokodaii).